Consider the following 722-residue polypeptide: MTKLTTELLLKKGLPKCSHLKDLKKLNLSKMQLDLKDLDQKLFSQMVNLDELDISHNTLSDLPGNLRLHNLRILNFADNHVEDVTVLKQFPNLEEVIYEDNIYLTVSDNYKVFCLLPKLRRLNNKDITSLANHVRFVNHRELSNRVEAYWESKYKDKLPDKPPSQKINAVAKDFIKAVVDNVRYGPSSLKDFVRWKVEMIARNLIFSLSNDPKKDTDPVLQTSEDTAVENSSKKRESADECTEGSPTKRPRIQIDLQSMPLSPRKSSRLQNSPLCLTPTKRKQETSAQGTPSKFIETKSPKIALKTTPSKKHTNELSAKITGKPKLPLTPKKIHKALDNIEPLHFLQCHSKNNSCEDFKTQLWACAFEPNLDSSCPKAVATCGGDSICIIDCETGKVMKKYKVTGEEFFTLVWTTLTMIGKDGQKRKINVLAAGGKYGVVRMIHAKGSLCYGEIKAHKKAISIMCFSPKQETFLFTGSYDKRIILWDIGVPDCDYNFRPSQLLTLDTTSVPLRMCVVPSCPDEFLVAACEDGCFAWDIGLDKKQGRRSHEVEFNFPLYKEERKDKCFHIIDSLAFLNEDIIASKSVMQGSIYLWSWEKTLKSRKNKNVKKLDAVILSQMKWSSSETPYLVLSTSPERDCVFCGDEDGKIWIYDLDSCKADLQRGKLCSTVKEPTKILSWPLLCSQKEKTVDKTLINVVTVDPTMEYLVALTDINIVSIWKIQ.

3 LRR repeats span residues 22–42 (DLKK…DQKL), 48–69 (NLDE…LRLH), and 70–91 (NLRI…KQFP). The tract at residues 211 to 292 (DPKKDTDPVL…QETSAQGTPS (82 aa)) is disordered. The segment covering 219–230 (VLQTSEDTAVEN) has biased composition (polar residues). WD repeat units follow at residues 456 to 496 (AHKK…CDYN), 506 to 546 (DTTS…KQGR), 565 to 604 (KCFH…KSRK), 623 to 662 (SSET…ADLQ), and 690 to 722 (VDKT…WKIQ).

It belongs to the LRWD1 family. In terms of assembly, component of the ORC complex.

The protein localises to the nucleus. It is found in the chromosome. Its subcellular location is the centromere. The protein resides in the telomere. It localises to the cytoplasm. The protein localises to the cytoskeleton. It is found in the microtubule organizing center. Its subcellular location is the centrosome. The protein resides in the kinetochore. Functionally, required for G1/S transition. Recruits and stabilizes the origin recognition complex (ORC) onto chromatin during G1 to establish pre-replication complex (preRC) and to heterochromatic sites in post-replicated cells. Binds a combination of DNA and histone methylation repressive marks on heterochromatin. Required for silencing of major satellite repeats. May be important ORC2, ORC3 and ORC4 stability. The protein is Leucine-rich repeat and WD repeat-containing protein 1 (lrwd1) of Xenopus laevis (African clawed frog).